We begin with the raw amino-acid sequence, 360 residues long: Peptide chain release factor 1 (360 aa).

Gln-237 is modified (N5-methylglutamine).

This sequence belongs to the prokaryotic/mitochondrial release factor family. In terms of processing, methylated by PrmC. Methylation increases the termination efficiency of RF1.

The protein localises to the cytoplasm. In terms of biological role, peptide chain release factor 1 directs the termination of translation in response to the peptide chain termination codons UAG and UAA. The protein is Peptide chain release factor 1 of Pseudomonas savastanoi pv. phaseolicola (strain 1448A / Race 6) (Pseudomonas syringae pv. phaseolicola (strain 1448A / Race 6)).